The sequence spans 705 residues: p-hydroxybenzoic acid--AMP ligase FadD22 (705 aa).

One can recognise a Carrier domain in the interval 541–619; sequence ERQRLVVDAV…GLAQYLEAEL (79 aa). The residue at position 579 (Ser-579) is an O-(pantetheine 4'-phosphoryl)serine.

This sequence belongs to the ATP-dependent AMP-binding enzyme family.

The catalysed reaction is holo-[4-hydroxyphenylalkanoate synthase] + 4-hydroxybenzoate + ATP = 4-hydroxyphenyl-[4-hydroxyphenylalkanoate synthase] + AMP + diphosphate. It functions in the pathway lipid metabolism; fatty acid biosynthesis. Functionally, catalyzes the adenylation of p-hydroxybenzoic acid (pHBA) to form p-hydroxybenzoic acid-AMP (pHBA-AMP), which is converted directly to p-hydroxybenzoyl-S-FadD22 (pHBA-S-FAdD22) thioester intermediate in a CoA-independent manner by attack of the phosphopantetheine thiol of FadD22. Usually, this intermediate primes the biosynthesis of the phenolphthiocerol (PPOL) by presenting the pHBA starter unit for elongation by Pks15/1, but M.tuberculosis lacks Pks15/1 due to a natural frameshift and thus is unable to produce PPOL. The sequence is that of p-hydroxybenzoic acid--AMP ligase FadD22 (fadD22) from Mycobacterium tuberculosis (strain CDC 1551 / Oshkosh).